We begin with the raw amino-acid sequence, 433 residues long: Glutamyl-tRNA reductase (433 aa).

Substrate contacts are provided by residues 49–52 (TCNR), Ser-114, 119–121 (EPQ), and Gln-125. The Nucleophile role is filled by Cys-50. 201–206 (GAGETI) is an NADP(+) binding site.

It belongs to the glutamyl-tRNA reductase family. Homodimer.

It catalyses the reaction (S)-4-amino-5-oxopentanoate + tRNA(Glu) + NADP(+) = L-glutamyl-tRNA(Glu) + NADPH + H(+). The protein operates within porphyrin-containing compound metabolism; protoporphyrin-IX biosynthesis; 5-aminolevulinate from L-glutamyl-tRNA(Glu): step 1/2. Catalyzes the NADPH-dependent reduction of glutamyl-tRNA(Glu) to glutamate 1-semialdehyde (GSA). The protein is Glutamyl-tRNA reductase of Histophilus somni (strain 129Pt) (Haemophilus somnus).